We begin with the raw amino-acid sequence, 916 residues long: Oxysterol-binding protein 2 (916 aa).

Disordered stretches follow at residues 1–20 (MGKA…SRGL), 34–121 (TAAP…PFTK), and 139–163 (PESG…TPLG). Positions 49 to 58 (EPKPQPQPVP) are enriched in pro residues. Residues 79-92 (RSEPVSETTSEPEP) are compositionally biased toward low complexity. Over residues 99–113 (ELLQGSRPGSESSSG) the composition is skewed to polar residues. The segment covering 144-155 (LPALKPLPLLRP) has biased composition (low complexity). Residues 182–274 (LDSFEGWLLK…WITALELAKA (93 aa)) enclose the PH domain. Disordered stretches follow at residues 282–301 (THSD…DKSE) and 417–448 (FHSA…EEDE). At S287 the chain carries Phosphoserine. A Phosphoserine modification is found at S763. Positions 813-842 (EGVAPTDSRLRPDQRLMEKGRWDEANTEKQ) are disordered.

Belongs to the OSBP family. As to quaternary structure, interacts with CCDC159. As to expression, expressed mainly in retina, testis, and fetal liver.

The protein resides in the membrane. The protein localises to the cytoplasmic vesicle. It is found in the secretory vesicle. Its subcellular location is the acrosome. Binds 7-ketocholesterol. Acts during spermatid development where its function is required prior to the removal of cytoplasm from the sperm head. The protein is Oxysterol-binding protein 2 (OSBP2) of Homo sapiens (Human).